We begin with the raw amino-acid sequence, 415 residues long: Corticotropin-releasing factor receptor 1 (415 aa).

Residues 1 to 23 form the signal peptide; it reads MARHPQLRLVKALLLLGLNPVSA. Over 24–111 the chain is Extracellular; that stretch reads SLQDQHCESL…CQEILNEEKK (88 aa). Intrachain disulfides connect C30/C54, C44/C87, and C68/C102. Residues N38, N78, and N98 are each glycosylated (N-linked (GlcNAc...) asparagine). An important for peptide agonist binding region spans residues 99-108; the sequence is YSECQEILNE. A helical transmembrane segment spans residues 112–142; the sequence is SKVHYHVAVIINYLGHCISLVALLVAFVLFL. The Cytoplasmic portion of the chain corresponds to 143-149; it reads RLRSIRC. A helical transmembrane segment spans residues 150 to 174; that stretch reads LRNIIHWNLISAFILRNATWFVVQL. Residues 175–189 lie on the Extracellular side of the membrane; sequence TMSPEVHQSNVGWCR. A disulfide bridge connects residues C188 and C258. A helical transmembrane segment spans residues 190–218; that stretch reads LVTAAYNYFHVTNFFWMFGEGCYLHTAIV. Residues 219-225 are Cytoplasmic-facing; it reads LTYSTDR. The helical transmembrane segment at 226 to 253 threads the bilayer; that stretch reads LRKWMFICIGWGVPFPIIVAWAIGKLYY. Topologically, residues 254–269 are extracellular; sequence DNEKCWFGKRPGVYTD. The helical transmembrane segment at 270 to 295 threads the bilayer; sequence YIYQGPMILVLLINFIFLFNIVRILM. Residues 280-290 form an important for antagonist binding region; that stretch reads LLINFIFLFNI. Residues 296 to 306 lie on the Cytoplasmic side of the membrane; that stretch reads TKLRASTTSET. S301 is modified (phosphoserine; by PKA). A helical membrane pass occupies residues 307–331; that stretch reads IQYRKAVKATLVLLPLLGITYMLFF. At 332–338 the chain is on the extracellular side; the sequence is VNPGEDE. The chain crosses the membrane as a helical span at residues 339-368; that stretch reads VSRVVFIYFNSFLESFQGFFVSVFYCFLNS. At 369–415 the chain is on the cytoplasmic side; that stretch reads EVRSAIRKRWHRWQDKHSIRARVARAMSIPTSPTRVSFHSIKQSTAV.

This sequence belongs to the G-protein coupled receptor 2 family. As to quaternary structure, heterodimer; heterodimerizes with GPER1. Interacts (via N-terminal extracellular domain) with CRH and UCN. Interacts with DLG1; this inhibits endocytosis of CRHR1 after agonist binding. C-terminal Ser or Thr residues may be phosphorylated. Post-translationally, phosphorylation at Ser-301 by PKA prevents maximal coupling to Gq-protein, and thereby negatively regulates downstream signaling. Expressed abundantly in the pituitary, cerebral cortex, hippocampus, amygdala and cerebellum.

It localises to the cell membrane. It is found in the endosome. Its function is as follows. G-protein coupled receptor for CRH (corticotropin-releasing factor) and UCN (urocortin). Has high affinity for CRH and UCN. Ligand binding causes a conformation change that triggers signaling via guanine nucleotide-binding proteins (G proteins) and down-stream effectors, such as adenylate cyclase. Promotes the activation of adenylate cyclase, leading to increased intracellular cAMP levels. Inhibits the activity of the calcium channel CACNA1H. Required for normal embryonic development of the adrenal gland and for normal hormonal responses to stress. Plays a role in the response to anxiogenic stimuli. The sequence is that of Corticotropin-releasing factor receptor 1 (CRHR1) from Macaca mulatta (Rhesus macaque).